The following is a 273-amino-acid chain: Pantothenate synthetase (273 aa).

27–34 serves as a coordination point for ATP; that stretch reads MGALHAGH. His34 (proton donor) is an active-site residue. Gln58 provides a ligand contact to (R)-pantoate. Position 58 (Gln58) interacts with beta-alanine. 144–147 lines the ATP pocket; it reads GKKD. Position 150 (Gln150) interacts with (R)-pantoate. ATP contacts are provided by residues Val173 and 181–184; that span reads LSSR.

It belongs to the pantothenate synthetase family. As to quaternary structure, homodimer.

It is found in the cytoplasm. The enzyme catalyses (R)-pantoate + beta-alanine + ATP = (R)-pantothenate + AMP + diphosphate + H(+). Its pathway is cofactor biosynthesis; (R)-pantothenate biosynthesis; (R)-pantothenate from (R)-pantoate and beta-alanine: step 1/1. Its function is as follows. Catalyzes the condensation of pantoate with beta-alanine in an ATP-dependent reaction via a pantoyl-adenylate intermediate. This is Pantothenate synthetase from Campylobacter hominis (strain ATCC BAA-381 / DSM 21671 / CCUG 45161 / LMG 19568 / NCTC 13146 / CH001A).